The sequence spans 389 residues: Succinyl-diaminopimelate desuccinylase (389 aa).

Residue His-75 coordinates Zn(2+). The active site involves Asp-77. Residue Asp-108 participates in Zn(2+) binding. The active-site Proton acceptor is Glu-142. 3 residues coordinate Zn(2+): Glu-143, Glu-171, and His-357.

The protein belongs to the peptidase M20A family. DapE subfamily. Homodimer. Zn(2+) serves as cofactor. Co(2+) is required as a cofactor.

It catalyses the reaction N-succinyl-(2S,6S)-2,6-diaminopimelate + H2O = (2S,6S)-2,6-diaminopimelate + succinate. Its pathway is amino-acid biosynthesis; L-lysine biosynthesis via DAP pathway; LL-2,6-diaminopimelate from (S)-tetrahydrodipicolinate (succinylase route): step 3/3. Its function is as follows. Catalyzes the hydrolysis of N-succinyl-L,L-diaminopimelic acid (SDAP), forming succinate and LL-2,6-diaminopimelate (DAP), an intermediate involved in the bacterial biosynthesis of lysine and meso-diaminopimelic acid, an essential component of bacterial cell walls. The sequence is that of Succinyl-diaminopimelate desuccinylase from Paracidovorax citrulli (strain AAC00-1) (Acidovorax citrulli).